An 83-amino-acid polypeptide reads, in one-letter code: Sec-independent protein translocase protein TatA (83 aa).

Residues 1–21 traverse the membrane as a helical segment; sequence MGNMGIWQLLIIAVIVILLFG. Basic and acidic residues-rich tracts occupy residues 47 to 57 and 71 to 83; these read EEKKALEETAS and AEKKTETKDKEQV. Residues 47–83 form a disordered region; sequence EEKKALEETASEKATPSVEKTAPNAEKKTETKDKEQV.

Belongs to the TatA/E family. As to quaternary structure, the Tat system comprises two distinct complexes: a TatABC complex, containing multiple copies of TatA, TatB and TatC subunits, and a separate TatA complex, containing only TatA subunits. Substrates initially bind to the TatABC complex, which probably triggers association of the separate TatA complex to form the active translocon.

It localises to the cell inner membrane. Part of the twin-arginine translocation (Tat) system that transports large folded proteins containing a characteristic twin-arginine motif in their signal peptide across membranes. TatA could form the protein-conducting channel of the Tat system. In Shewanella woodyi (strain ATCC 51908 / MS32), this protein is Sec-independent protein translocase protein TatA.